Consider the following 376-residue polypeptide: Erythronate-4-phosphate dehydrogenase (376 aa).

Positions 45 and 67 each coordinate substrate. NAD(+) is bound at residue Asp-147. Arg-209 is a catalytic residue. NAD(+) is bound at residue Asp-233. Glu-238 is an active-site residue. His-255 serves as the catalytic Proton donor. Residue Gly-258 coordinates NAD(+). Substrate is bound at residue Tyr-259.

The protein belongs to the D-isomer specific 2-hydroxyacid dehydrogenase family. PdxB subfamily. Homodimer.

Its subcellular location is the cytoplasm. It catalyses the reaction 4-phospho-D-erythronate + NAD(+) = (R)-3-hydroxy-2-oxo-4-phosphooxybutanoate + NADH + H(+). It functions in the pathway cofactor biosynthesis; pyridoxine 5'-phosphate biosynthesis; pyridoxine 5'-phosphate from D-erythrose 4-phosphate: step 2/5. Catalyzes the oxidation of erythronate-4-phosphate to 3-hydroxy-2-oxo-4-phosphonooxybutanoate. This Shewanella sp. (strain W3-18-1) protein is Erythronate-4-phosphate dehydrogenase.